Consider the following 404-residue polypeptide: MDDLMTNIEHYHVSLTTGFLPPSAPLTHLPQKYYEPWETLASSLPTRIRDGSLRHQASLIPLLETDFLVTDAEWQRAYVVLGFLSNAFIFCQYPPSERLPLSLAEPMMNVSCYLGLPCVPTYSGQTLWNHCYISEIQLPVLEQVNTLVSFTGSREESAFFGISVAIEKCGSPLIRTLLHAMAAAEAGNEKELTACLSKAMITIDSITSILPQLYGRCSPSFFYNTLRPFLEGTQDLKSAGLPNGVFFETKNGGSYQKFRGPSNAQSSLFCFIDIALGIEHNDNSFLTEMRQYMPGPHRDFLARVEAIDSVRHFISANPDASQLQEAYEGCVLALARFRQIHIRLVARYIVIPSNGTKTADQSSMGNGLSSEPVSIAGAQGTGGTKPVEFLKVIRNDVLESLQAS.

Heme b is bound at residue H341.

Belongs to the indoleamine 2,3-dioxygenase family. Requires heme as cofactor.

It functions in the pathway secondary metabolite biosynthesis. In terms of biological role, 6-hydroxytryptophan 2,3-dioxygenase; part of the fragmented gene cluster that mediates the biosynthesis of fusarochromene, a tryptophan-derived metabolite closely related to a group of mycotoxins including fusarochromanone. Within the pathway, fscD is responsible of the cleavage of the pyrrole ring of 6-hydroxytryptophan. The first step of the pathway is the epimerization of L-tryptophan to D-tryptophan in the presence of the NRPS-like tryptophan epimerase fscC. D-tryptophan is subsequently hydroxylated by the tryptophan 6-hydroxylase fscE to yield 6-hydroxytryptophan. The pyrrole ring undergoes cleavaged by the tryptophan 2,3-dioxygenase fscD and is finally converted to 4-hydroxykyrunenine by the hydrolase fscH. The NRPS-like oxidoreductase fscA reduces the carboxyl group to primary alcohol and the DMATS-type prenyltransferase fscG performs prenylation, followed by the formation of a chromene ring catalyzed by the oxidoreductase fscI, which leads to desacetylfusarochromene. Epoxidation by fscF and rearrangement reactions of chromene double bonds convert compound desacetylfusarochromene to fusarochromanones. Although specific acetyltransferases were not found near the fsc gene cluster, several predicted enzymes containing the N-acetyltransferase superfamily domain are present in the genome of F.equiseti. These predicted enzymes may have the potential to convert desacetylfusarochromene to fusarochromene. The chain is 6-hydroxytryptophan 2,3-dioxygenase fscD from Fusarium equiseti (Fusarium scirpi).